We begin with the raw amino-acid sequence, 282 residues long: MNNTIFNVLNKIKNTNISLNKADVYHILEHIINKDYQWIISNLDHKLTKKQIYKIDQILDLLKQNYPLAYILKSKYFYSNIFFVNKDVLIPRNESELIIDHVSEFVKNNNDLLIVDLCTGSGCLGISCALLNDQNKVILTDISYKSLKVANKNIKKFNLINTSCLNGNFIDVLIKNNLKANLIICNPPYIDINDQNIDKNVIDFEPSIALFAPNKGLYFYEILIKNIDKIVDTNKNFLIVLEFGWLQKDSIEQLLINNCLKYKWEFKKDYNDYWRNLIIKNF.

Residues Asp141, Phe169, and Asn186 each coordinate S-adenosyl-L-methionine. Substrate is bound at residue 186–189 (NPPY).

It belongs to the protein N5-glutamine methyltransferase family. PrmC subfamily.

The enzyme catalyses L-glutaminyl-[peptide chain release factor] + S-adenosyl-L-methionine = N(5)-methyl-L-glutaminyl-[peptide chain release factor] + S-adenosyl-L-homocysteine + H(+). In terms of biological role, methylates the class 1 translation termination release factors RF1/PrfA and RF2/PrfB on the glutamine residue of the universally conserved GGQ motif. This chain is Release factor glutamine methyltransferase, found in Mycoplasma mycoides subsp. mycoides SC (strain CCUG 32753 / NCTC 10114 / PG1).